Here is a 545-residue protein sequence, read N- to C-terminus: Esterase-5C (545 aa).

The signal sequence occupies residues Met-1–Ala-19. Cys-84 and Cys-103 are joined by a disulfide. An N-linked (GlcNAc...) asparagine glycan is attached at Asn-113. The active-site Acyl-ester intermediate is Ser-207. Cys-259 and Cys-271 are disulfide-bonded. Asn-421 is a glycosylation site (N-linked (GlcNAc...) asparagine). The active-site Charge relay system is His-467. Asn-507 is a glycosylation site (N-linked (GlcNAc...) asparagine). Cys-515 and Cys-536 are joined by a disulfide.

This sequence belongs to the type-B carboxylesterase/lipase family.

It is found in the secreted. It carries out the reaction a carboxylic ester + H2O = an alcohol + a carboxylate + H(+). The protein is Esterase-5C (Est-5C) of Drosophila miranda (Fruit fly).